The primary structure comprises 908 residues: MEEGGRDKAPLQPQQPPATSPGSGDEKPSGKERRDAGDKDKEQELSEEDKQLQDELEMLVERLGEKDTSLYRPALEELRRQIRSSTTSMTSVPKPLKFLRPHYGKLKEIYENMAPGENKRFAADIISVLAMTMSGERECLKYRLVGSQEELASWGHEYVRHLAGEVAKEWQELDDAEKTQREPLLTLVKEIVPYNMAHNAEHEACDLLMEIEQVDMLEKDIDENAYAKVCLYLTSCVNYVPEPENSALLRCALGVFRKFSRFPEALRLALMLNDMELVEDIFTSCKDVVVQKQMAFMLGRHGVFLELSEDVEEYEDLTEIMSNVQLNSNFLALARELDIMEPKVPDDIYKTHLENNRFGGSGSQVDSARMNLASSFVNGFVNAAFGQDKLLTDDGNKWLYKNKDHGMLSAAASLGMILLWDVDGGLTQIDKYLYSSEDYIKSGALLACGIVNSGVRNECDPALALLSDYVLHNSNTMRLGSIFGLGLAYAGSNREDVLTLLLPVMGDSKSSMEVAGVTALACGMIAVGSCNGDVTSTILQTIMEKSETELKDTYARWLPLGLGLNHLGKGEAIEAILAALEVVSEPFRSFANTLVDVCAYAGSGNVLKVQQLLHICSEHFDSKEKEEDKDKKEKKDKDKKEAPADMGAHQGVAVLGIALIAMGEEIGAEMALRTFGHLLRYGEPTLRRAVPLALALISVSNPRLNILDTLSKFSHDADPEVSYNSIFAMGMVGSGTNNARLAAMLRQLAQYHAKDPNNLFMVRLAQGLTHLGKGTLTLCPYHSDRQLMSQVAVAGLLTVLVSFLDVRNIILGKSHYVLYGLVAAMQPRMLVTFDEELRPLPVSVRVGQAVDVVGQAGKPKTITGFQTHTTPVLLAHGERAELATEEFLPVTPILEGFVILRKNPNYDL.

M1 carries the post-translational modification N-acetylmethionine. Positions 1–52 (MEEGGRDKAPLQPQQPPATSPGSGDEKPSGKERRDAGDKDKEQELSEEDKQL) are disordered. A compositionally biased stretch (basic and acidic residues) spans 24 to 52 (GDEKPSGKERRDAGDKDKEQELSEEDKQL). Residues S29 and S147 each carry the phosphoserine modification. Y194 carries the phosphotyrosine modification. Phosphoserine is present on residues S361 and S363. PC repeat units follow at residues 409 to 442 (SAAA…YIKS), 443 to 479 (GALL…TMRL), 480 to 514 (GSIF…SMEV), 517 to 551 (VTAL…TELK), and 560 to 589 (LGLG…PFRS). An N6-acetyllysine modification is found at K551. A compositionally biased stretch (basic and acidic residues) spans 623-643 (KEKEEDKDKKEKKDKDKKEAP). The tract at residues 623 to 645 (KEKEEDKDKKEKKDKDKKEAPAD) is disordered. PC repeat units lie at residues 692-723 (LALA…EVSY) and 742-757 (AAML…KDPN). The tract at residues 708–903 (DTLSKFSHDA…LEGFVILRKN (196 aa)) is required for interaction with UBLCP1.

This sequence belongs to the proteasome subunit S2 family. Component of the 19S proteasome regulatory particle complex. The 26S proteasome consists of a 20S core particle (CP) and two 19S regulatory subunits (RP). The regulatory particle is made of a lid composed of 9 subunits, a base containing 6 ATPases and few additional components including PSMD2. Interacts with RPGRIP1L. Interacts with CRY1 in a KDM8-dependent manner. Interacts (via C-terminus) with phosphatase UBLCP1 (via ubiquitin-like domain); the interaction recruits UBLCP1 to the 19S regulatory particle where it dephosphorylates 19S subunit PSMC2/RPT1 which impairs PSMC2 ATPase activity and disrupts 26S proteasome assembly.

Component of the 26S proteasome, a multiprotein complex involved in the ATP-dependent degradation of ubiquitinated proteins. This complex plays a key role in the maintenance of protein homeostasis by removing misfolded or damaged proteins, which could impair cellular functions, and by removing proteins whose functions are no longer required. Therefore, the proteasome participates in numerous cellular processes, including cell cycle progression, apoptosis, or DNA damage repair. Functionally, binds to the intracellular domain of tumor necrosis factor type 1 receptor. The binding domain of TRAP1 and TRAP2 resides outside the death domain of TNFR1. In Bos taurus (Bovine), this protein is 26S proteasome non-ATPase regulatory subunit 2 (PSMD2).